The chain runs to 130 residues: MVMFMVFRILGRMTKIEKEIKEEEAKYDLIIKNEAKIEPIVAEEDMEFKQGDIKPIRIKKIKIPPMSVLLICPYGRHRVGHVVAVGEEVPMPIDVEREVDMAMFACGFEGEVKKGDLIGMLLILAAEKRE.

This is an uncharacterized protein from Methanocaldococcus jannaschii (strain ATCC 43067 / DSM 2661 / JAL-1 / JCM 10045 / NBRC 100440) (Methanococcus jannaschii).